A 233-amino-acid chain; its full sequence is Large ribosomal subunit protein uL1 (233 aa).

Belongs to the universal ribosomal protein uL1 family. Part of the 50S ribosomal subunit.

Functionally, binds directly to 23S rRNA. The L1 stalk is quite mobile in the ribosome, and is involved in E site tRNA release. Its function is as follows. Protein L1 is also a translational repressor protein, it controls the translation of the L11 operon by binding to its mRNA. This Novosphingobium aromaticivorans (strain ATCC 700278 / DSM 12444 / CCUG 56034 / CIP 105152 / NBRC 16084 / F199) protein is Large ribosomal subunit protein uL1.